Here is a 516-residue protein sequence, read N- to C-terminus: Squalene epoxidase 4 (516 aa).

The next 2 membrane-spanning stretches (helical) occupy residues 2–22 (TYAW…FHLI) and 43–63 (ATDV…YALA). FAD is bound by residues 53–54 (VA), 73–74 (ER), Arg81, Arg153, Val169, Asp335, and Met348. A helical membrane pass occupies residues 435-455 (ILGGMNPHPLTLVLHLVAITL).

It belongs to the squalene monooxygenase family. FAD is required as a cofactor. In terms of tissue distribution, expressed mainly in seedlings and inflorescences.

It localises to the membrane. The catalysed reaction is squalene + reduced [NADPH--hemoprotein reductase] + O2 = (S)-2,3-epoxysqualene + oxidized [NADPH--hemoprotein reductase] + H2O + H(+). Its pathway is terpene metabolism; lanosterol biosynthesis; lanosterol from farnesyl diphosphate: step 2/3. Catalyzes the stereospecific oxidation of squalene to (S)-2,3-epoxysqualene, and is considered to be a rate-limiting enzyme in steroid biosynthesis. The chain is Squalene epoxidase 4 (SQE4) from Arabidopsis thaliana (Mouse-ear cress).